Reading from the N-terminus, the 387-residue chain is Patatin group D-3 (387 aa).

The signal sequence occupies residues 1–23 (MATTKSFLILIVMILATTSSTFA). The PNPLA domain maps to 32 to 230 (LSIDGGGIKG…TVADPALLSI (199 aa)). Residues 36–41 (GGGIKG) carry the GXGXXG motif. The GXSXG motif lies at 75–79 (GTSTG). Catalysis depends on S77, which acts as the Nucleophile. The N-linked (GlcNAc...) asparagine glycan is linked to N115. Residue D216 is the Proton acceptor of the active site. The DGA/G signature appears at 216-218 (DGA). Positions 361-385 (ETYEEALKRFAKLLSDRKKLRANKA) form a coiled coil.

It belongs to the patatin family. In terms of tissue distribution, tuber.

The protein localises to the vacuole. Functionally, probable lipolytic acyl hydrolase (LAH), an activity which is thought to be involved in the response of tubers to pathogens. The protein is Patatin group D-3 of Solanum tuberosum (Potato).